Reading from the N-terminus, the 165-residue chain is uncharacterized protein (165 aa).

The chain crosses the membrane as a helical span at residues 4-26 (FVIGTMIALAGLLVGGGVGSYFT).

It is found in the membrane. This is an uncharacterized protein from Aquifex aeolicus (strain VF5).